The sequence spans 987 residues: Ephrin type-B receptor 4 (987 aa).

Residues 1 to 15 (MELRALLCWASLATA) form the signal peptide. The Extracellular portion of the chain corresponds to 16–539 (LEETLLNTKL…ESESWREQLA (524 aa)). The region spanning 17–202 (EETLLNTKLE…FYKKCSWLIT (186 aa)) is the Eph LBD domain. 2 disulfides stabilise this stretch: cysteine 61/cysteine 184 and cysteine 97/cysteine 107. N-linked (GlcNAc...) asparagine glycosylation is found at asparagine 203, asparagine 335, and asparagine 426. Fibronectin type-III domains follow at residues 323-432 (PPSA…TDRE) and 436-529 (AVSD…TQLD). A helical membrane pass occupies residues 540–560 (LIAGTAVVGVVLVLVVVIIAV). Topologically, residues 561-987 (LCLRKQSNGR…GGTGGPAQQF (427 aa)) are cytoplasmic. Residues 615–899 (VKIEEVIGAG…ENGGASHPLL (285 aa)) form the Protein kinase domain. ATP is bound by residues 621-629 (IGAGEFGEV) and lysine 647. Aspartate 740 (proton acceptor) is an active-site residue. Phosphoserine is present on residues serine 769, serine 770, serine 911, and serine 943. The SAM domain maps to 907-971 (SAFGSVGEWL…LASVQHMKSQ (65 aa)). The tract at residues 965–987 (VQHMKSQAKPGAPGGTGGPAQQF) is disordered. Gly residues predominate over residues 976–987 (APGGTGGPAQQF). Positions 985–987 (QQF) match the PDZ-binding motif.

The protein belongs to the protein kinase superfamily. Tyr protein kinase family. Ephrin receptor subfamily. In terms of assembly, heterotetramer upon binding of the ligand. The heterotetramer is composed of an ephrin dimer and a receptor dimer. Oligomerization is probably required to induce biological responses. Interacts with RASA1; the interaction depends on EPHB4 tyrosine-phosphorylation. Phosphorylated; autophosphorylation is stimulated by EFNB2. In terms of tissue distribution, expressed in various organ systems, including lung, liver, kidney, intestine, muscle and heart. Expressed in myogenic progenitor cells.

The protein localises to the cell membrane. It carries out the reaction L-tyrosyl-[protein] + ATP = O-phospho-L-tyrosyl-[protein] + ADP + H(+). Functionally, receptor tyrosine kinase which binds promiscuously transmembrane ephrin-B family ligands residing on adjacent cells, leading to contact-dependent bidirectional signaling into neighboring cells. The signaling pathway downstream of the receptor is referred to as forward signaling while the signaling pathway downstream of the ephrin ligand is referred to as reverse signaling. Together with its cognate ligand/functional ligand EFNB2 it is involved in the regulation of cell adhesion and migration, and plays a central role in heart morphogenesis, angiogenesis and blood vessel remodeling and permeability. EPHB4-mediated forward signaling controls cellular repulsion and segregation from EFNB2-expressing cells. This Mus musculus (Mouse) protein is Ephrin type-B receptor 4 (Ephb4).